A 140-amino-acid chain; its full sequence is Large ribosomal subunit protein bL17 (140 aa).

Belongs to the bacterial ribosomal protein bL17 family. Part of the 50S ribosomal subunit. Contacts protein L32.

The sequence is that of Large ribosomal subunit protein bL17 from Rhizobium etli (strain ATCC 51251 / DSM 11541 / JCM 21823 / NBRC 15573 / CFN 42).